Here is a 197-residue protein sequence, read N- to C-terminus: ATP-dependent Clp protease proteolytic subunit (197 aa).

Catalysis depends on Ser98, which acts as the Nucleophile. The active site involves His123.

Belongs to the peptidase S14 family. Fourteen ClpP subunits assemble into 2 heptameric rings which stack back to back to give a disk-like structure with a central cavity, resembling the structure of eukaryotic proteasomes.

It localises to the cytoplasm. It catalyses the reaction Hydrolysis of proteins to small peptides in the presence of ATP and magnesium. alpha-casein is the usual test substrate. In the absence of ATP, only oligopeptides shorter than five residues are hydrolyzed (such as succinyl-Leu-Tyr-|-NHMec, and Leu-Tyr-Leu-|-Tyr-Trp, in which cleavage of the -Tyr-|-Leu- and -Tyr-|-Trp bonds also occurs).. In terms of biological role, cleaves peptides in various proteins in a process that requires ATP hydrolysis. Has a chymotrypsin-like activity. Plays a major role in the degradation of misfolded proteins. The protein is ATP-dependent Clp protease proteolytic subunit of Pediococcus pentosaceus (strain ATCC 25745 / CCUG 21536 / LMG 10740 / 183-1w).